The primary structure comprises 431 residues: Adenylosuccinate synthetase (431 aa).

Residues 13 to 19 (GDEGKGK) and 41 to 43 (GHT) each bind GTP. Aspartate 14 (proton acceptor) is an active-site residue. Mg(2+) contacts are provided by aspartate 14 and glycine 41. IMP contacts are provided by residues 14–17 (DEGK), 39–42 (NAGH), threonine 130, arginine 144, glutamine 225, threonine 240, and arginine 304. Histidine 42 functions as the Proton donor in the catalytic mechanism. Substrate is bound at residue 300-306 (ATTGRKR). GTP is bound by residues arginine 306, 332–334 (KLD), and 415–417 (STG).

Belongs to the adenylosuccinate synthetase family. As to quaternary structure, homodimer. Mg(2+) is required as a cofactor.

The protein resides in the cytoplasm. It carries out the reaction IMP + L-aspartate + GTP = N(6)-(1,2-dicarboxyethyl)-AMP + GDP + phosphate + 2 H(+). The protein operates within purine metabolism; AMP biosynthesis via de novo pathway; AMP from IMP: step 1/2. Plays an important role in the de novo pathway of purine nucleotide biosynthesis. Catalyzes the first committed step in the biosynthesis of AMP from IMP. This is Adenylosuccinate synthetase from Shewanella denitrificans (strain OS217 / ATCC BAA-1090 / DSM 15013).